The primary structure comprises 375 residues: Succinyl-diaminopimelate desuccinylase (375 aa).

His-66 provides a ligand contact to Zn(2+). The active site involves Asp-68. Residue Asp-99 participates in Zn(2+) binding. The active-site Proton acceptor is Glu-133. 3 residues coordinate Zn(2+): Glu-134, Glu-162, and His-348.

Belongs to the peptidase M20A family. DapE subfamily. Homodimer. Zn(2+) is required as a cofactor. Co(2+) serves as cofactor.

It catalyses the reaction N-succinyl-(2S,6S)-2,6-diaminopimelate + H2O = (2S,6S)-2,6-diaminopimelate + succinate. It participates in amino-acid biosynthesis; L-lysine biosynthesis via DAP pathway; LL-2,6-diaminopimelate from (S)-tetrahydrodipicolinate (succinylase route): step 3/3. Functionally, catalyzes the hydrolysis of N-succinyl-L,L-diaminopimelic acid (SDAP), forming succinate and LL-2,6-diaminopimelate (DAP), an intermediate involved in the bacterial biosynthesis of lysine and meso-diaminopimelic acid, an essential component of bacterial cell walls. This is Succinyl-diaminopimelate desuccinylase from Yersinia pestis bv. Antiqua (strain Antiqua).